We begin with the raw amino-acid sequence, 500 residues long: Phosphatidylserine decarboxylase proenzyme 1, mitochondrial (500 aa).

A mitochondrion; not cleaved when targeted to the endoplasmic reticulum-targeting transit peptide spans 1-48 (MSIMPVKNALAQGRTLLMGRMPAVKFSTRMQLRNRTAVLWNRKFSTRL). The N-linked (GlcNAc...) asparagine glycan is linked to N34. Topologically, residues 45–79 (STRLFVQQRRSSGEIVDRAKAAAANSGRKQVSMKW) are mitochondrial matrix. Residues 57–101 (GEIVDRAKAAAANSGRKQVSMKWVVLTSFTIVLGTILLVSRNDST) are enables targeting to the endoplasmic reticulum in addition to mitochondria. A helical transmembrane segment spans residues 80-98 (VVLTSFTIVLGTILLVSRN). At 99 to 500 (DSTEEDATEG…LGIIGKNDLK (402 aa)) the chain is on the mitochondrial intermembrane side. Active-site charge relay system; for autoendoproteolytic cleavage activity residues include D210, H348, and S463. S463 acts as the Schiff-base intermediate with substrate; via pyruvic acid; for decarboxylase activity in catalysis. S463 carries the post-translational modification Pyruvic acid (Ser); by autocatalysis. Positions 475-492 (FKFDVRVGDKVKMGQKLG) are required for processing and stability.

The protein belongs to the phosphatidylserine decarboxylase family. PSD-B subfamily. Eukaryotic type I sub-subfamily. As to quaternary structure, heterodimer of a large membrane-associated beta subunit and a small pyruvoyl-containing alpha subunit. Requires pyruvate as cofactor. In terms of processing, glycosylated at Asn-34 in the endoplasmic reticulum. Post-translationally, the precursor is imported via the TOM complex into mitochondria, where the N-terminal presequence is cleaved by the matrix-located proteases MPP (MAS1-MAS2) and OCT1. Is synthesized initially as an inactive proenzyme. Formation of the active enzyme involves a self-maturation process in which the active site pyruvoyl group is generated from an internal serine residue via an autocatalytic post-translational modification. Two non-identical subunits are generated from the proenzyme in this reaction, and the pyruvate is formed at the N-terminus of the alpha chain, which is derived from the carboxyl end of the proenzyme. The autoendoproteolytic cleavage occurs by a canonical serine protease mechanism, in which the side chain hydroxyl group of the serine supplies its oxygen atom to form the C-terminus of the beta chain, while the remainder of the serine residue undergoes an oxidative deamination to produce ammonia and the pyruvoyl prosthetic group on the alpha chain. During this reaction, the Ser that is part of the protease active site of the proenzyme becomes the pyruvoyl prosthetic group, which constitutes an essential element of the active site of the mature decarboxylase.

It localises to the mitochondrion inner membrane. It is found in the lipid droplet. Its subcellular location is the endoplasmic reticulum membrane. It carries out the reaction a 1,2-diacyl-sn-glycero-3-phospho-L-serine + H(+) = a 1,2-diacyl-sn-glycero-3-phosphoethanolamine + CO2. The protein operates within phospholipid metabolism; phosphatidylethanolamine biosynthesis; phosphatidylethanolamine from CDP-diacylglycerol: step 2/2. Its function is as follows. Catalyzes the formation of phosphatidylethanolamine (PtdEtn) from phosphatidylserine (PtdSer). Plays a central role in phospholipid metabolism and in the interorganelle trafficking of phosphatidylserine. Phosphatidylethanolamine formed in the mitochondria is exported to other membranes to fullfill their requirements for PtdEtn. Required for normal mitochondrial morphology and proper mitochondrial fusion during yeast mating. Involved in lipid droplet biogenesis at the endoplasmic reticulum membrane. Required for induction of mitophagy during nitrogen starvation. Appears to play a specific role in supporting respiratory complex III activity. This chain is Phosphatidylserine decarboxylase proenzyme 1, mitochondrial, found in Saccharomyces cerevisiae (strain ATCC 204508 / S288c) (Baker's yeast).